Reading from the N-terminus, the 37-residue chain is Large ribosomal subunit protein bL36c (37 aa).

It belongs to the bacterial ribosomal protein bL36 family.

The protein resides in the plastid. The protein localises to the chloroplast. The sequence is that of Large ribosomal subunit protein bL36c from Chara vulgaris (Common stonewort).